The primary structure comprises 90 residues: Molybdopterin synthase sulfur carrier subunit (90 aa).

Position 90 is a 1-thioglycine; alternate (glycine 90). A Glycyl adenylate; alternate modification is found at glycine 90.

The protein belongs to the MoaD family. MOCS2A subfamily. In terms of assembly, heterotetramer; composed of 2 small (Mocs2A) and 2 large (Mocs2B) subunits. In terms of processing, C-terminal thiocarboxylation occurs in 2 steps, it is first acyl-adenylated (-COAMP) via the hesA/moeB/thiF part of MOCS3, then thiocarboxylated (-COSH) via the rhodanese domain of MOCS3.

It localises to the cytoplasm. It functions in the pathway cofactor biosynthesis; molybdopterin biosynthesis. Functionally, acts as a sulfur carrier required for molybdopterin biosynthesis. Component of the molybdopterin synthase complex that catalyzes the conversion of precursor Z into molybdopterin by mediating the incorporation of 2 sulfur atoms into precursor Z to generate a dithiolene group. In the complex, serves as sulfur donor by being thiocarboxylated (-COSH) at its C-terminus by MOCS3. After interaction with Mocs2B, the sulfur is then transferred to precursor Z to form molybdopterin. In Drosophila yakuba (Fruit fly), this protein is Molybdopterin synthase sulfur carrier subunit.